A 247-amino-acid polypeptide reads, in one-letter code: 6-phosphogluconolactonase (247 aa).

It belongs to the glucosamine/galactosamine-6-phosphate isomerase family. 6-phosphogluconolactonase subfamily.

The catalysed reaction is 6-phospho-D-glucono-1,5-lactone + H2O = 6-phospho-D-gluconate + H(+). It participates in carbohydrate degradation; pentose phosphate pathway; D-ribulose 5-phosphate from D-glucose 6-phosphate (oxidative stage): step 2/3. Its function is as follows. Hydrolysis of 6-phosphogluconolactone to 6-phosphogluconate. In Mycobacterium bovis (strain ATCC BAA-935 / AF2122/97), this protein is 6-phosphogluconolactonase (pgl).